A 390-amino-acid chain; its full sequence is Phosphoglycerate kinase (390 aa).

Substrate contacts are provided by residues 21–23 (DMN), R36, 59–62 (HLGR), R113, and R146. ATP contacts are provided by residues K197, E319, and 345 to 348 (GGDT).

This sequence belongs to the phosphoglycerate kinase family. As to quaternary structure, monomer.

The protein resides in the cytoplasm. It carries out the reaction (2R)-3-phosphoglycerate + ATP = (2R)-3-phospho-glyceroyl phosphate + ADP. It participates in carbohydrate degradation; glycolysis; pyruvate from D-glyceraldehyde 3-phosphate: step 2/5. This chain is Phosphoglycerate kinase, found in Laribacter hongkongensis (strain HLHK9).